The sequence spans 282 residues: Putative SLC9B1-like protein SLC9B1P1 (282 aa).

The next 7 membrane-spanning stretches (helical) occupy residues 27 to 47 (LLAITGFNTCLSIVFYSGGMI), 51 to 71 (IASLRNVCISLLAGIVLGFFV), 87 to 107 (GFLVLITFVSAVLGSQPIGLH), 135 to 155 (IITNVWDIFQPLLFGLVGAEV), 174 to 194 (LALCVRILNIYLLMCFAGFSF), 198 to 218 (IFIALAWMPKATVQAVLGPLA), and 239 to 259 (VAFLAIMITAPNGALLMGILG).

It belongs to the monovalent cation:proton antiporter 1 (CPA1) transporter (TC 2.A.36) family.

It localises to the membrane. In Homo sapiens (Human), this protein is Putative SLC9B1-like protein SLC9B1P1 (SLC9B1P1).